Reading from the N-terminus, the 846-residue chain is Leucine--tRNA ligase (846 aa).

Residues 47–57 (PYPSGRIHMGH) carry the 'HIGH' region motif. Positions 621–625 (KMSKS) match the 'KMSKS' region motif. Lys624 is an ATP binding site.

This sequence belongs to the class-I aminoacyl-tRNA synthetase family.

The protein localises to the cytoplasm. It carries out the reaction tRNA(Leu) + L-leucine + ATP = L-leucyl-tRNA(Leu) + AMP + diphosphate. The protein is Leucine--tRNA ligase of Zymomonas mobilis subsp. mobilis (strain ATCC 31821 / ZM4 / CP4).